The following is a 1728-amino-acid chain: Hybrid PKS-NRPS synthetase TAS1 (1728 aa).

Positions 153-499 (SPLSKAQMAL…MDPTLLDFKV (347 aa)) are condensation (C) domain. The tract at residues 608–1002 (KARAASQPDL…KLHIQGRIGN (395 aa)) is adenylation (A) domain. A Carrier domain is found at 1141-1219 (MLRRHLTAEV…KQVDCLMGIV (79 aa)). Position 1177 is an O-(pantetheine 4'-phosphoryl)serine (S1177). The tract at residues 1225-1256 (LGSEPTGGSSSRSQSRRSAETSSSSTSAPSSV) is disordered. Low complexity-rich tracts occupy residues 1226–1237 (GSEPTGGSSSRS) and 1244–1255 (ETSSSSTSAPSS). One can recognise a Ketosynthase family 3 (KS3) domain in the interval 1262–1714 (RNLYAIVGIS…SDATWFVIST (453 aa)). Active-site for beta-ketoacyl synthase activity residues include C1436, H1579, and N1633.

This sequence in the N-terminal section; belongs to the NRP synthetase family. Requires pantetheine 4'-phosphate as cofactor.

It carries out the reaction acetoacetyl-CoA + L-isoleucine + ATP = tenuazonic acid + AMP + diphosphate + CoA + 2 H(+). Its function is as follows. Hybrid PKS-NRPS synthetase that mediates the biosynthesis of the toxin tenuazonic acid (TeA), an inhibitor of protein biosynthesis on ribosomes by suppressing the release of new protein. TAS1 alone is sufficient for TeA synthesis via the condensation of isoleucine (Ile) with acetoacetyl-CoA by the N-terminal NRPS module and subsequent cyclization conducted by the C-terminal KS domain. The chain is Hybrid PKS-NRPS synthetase TAS1 from Pyricularia oryzae (strain 70-15 / ATCC MYA-4617 / FGSC 8958) (Rice blast fungus).